Here is a 65-residue protein sequence, read N- to C-terminus: Large ribosomal subunit protein uL29 (65 aa).

Belongs to the universal ribosomal protein uL29 family.

The polypeptide is Large ribosomal subunit protein uL29 (Natranaerobius thermophilus (strain ATCC BAA-1301 / DSM 18059 / JW/NM-WN-LF)).